An 811-amino-acid chain; its full sequence is Hypoxia-inducible factor 1-alpha (811 aa).

Residues 1–27 (MDSPGGVTDKKRISSERRKEKSRDAAR) are disordered. Positions 8 to 27 (TDKKRISSERRKEKSRDAAR) are enriched in basic and acidic residues. The 54-residue stretch at 17 to 70 (RRKEKSRDAARCRRSKESEVFYELAHQLPLPHTVSAHLDKASIMRLTISYLRMR) folds into the bHLH domain. PAS domains are found at residues 80–157 (TEAN…PVKK) and 228–298 (PHPS…FTKG). In terms of domain architecture, PAC spans 302-345 (TGQYRMLAKQGGYVWVETQATVIYNTKNSQPQCIVCVNYVLSGI). Residues 401–587 (APAAGDTIIS…LSPLESSSSG (187 aa)) form an ODD region. 4-hydroxyproline is present on Pro402. The segment at 490-518 (PQVQEQPTSPSDASTSQSSPEPSSPNDYC) is disordered. A compositionally biased stretch (low complexity) spans 496-514 (PTSPSDASTSQSSPEPSSP). The tract at residues 529-573 (FKLELVEKLFAIDTEAKNPFSTQETDLDLEMLAPYIPMDDDFQLR) is NTAD. A 4-hydroxyproline modification is found at Pro562. An ID region spans residues 576–785 (DQLSPLESSS…GLPQLTSYDC (210 aa)). Positions 634–652 (NDTSSAPASPYSGNRSRTA) are enriched in polar residues. Positions 634–655 (NDTSSAPASPYSGNRSRTASPI) are disordered. 2 consecutive short sequence motifs (nuclear localization signal) follow at residues 703–706 (RKRK) and 718–721 (GIGS). The tract at residues 771–811 (SMDESGLPQLTSYDCEVNAPIQGNRNLLQGEELLRALDQVN) is CTAD. Asn788 is subject to (3S)-3-hydroxyasparagine.

Efficient DNA binding requires heterodimerization of an alpha and a beta/ARNT subunit. Post-translationally, in normoxia, is hydroxylated on Pro-402 and Pro-562. The hydroxylated prolines promote interaction with VHL, initiating rapid ubiquitination and subsequent proteasomal degradation. Under hypoxia, proline hydroxylation is impaired and ubiquitination is attenuated, resulting in stabilization. In normoxia, is hydroxylated on Asn-788, thus abrogating interaction with CREBBP and EP300 and preventing transcriptional activation. In terms of processing, the iron and 2-oxoglutarate dependent 3-hydroxylation of asparagine is (S) stereospecific within HIF CTAD domains.

The protein localises to the cytoplasm. Its subcellular location is the nucleus. It is found in the nucleus speckle. Induced by reactive oxygen species (ROS). In terms of biological role, functions as a master transcriptional regulator of the adaptive response to hypoxia. Under hypoxic conditions, activates the transcription of over 40 genes, including erythropoietin, glucose transporters, glycolytic enzymes, vascular endothelial growth factor, HILPDA, and other genes whose protein products increase oxygen delivery or facilitate metabolic adaptation to hypoxia. Plays an essential role in embryonic vascularization, tumor angiogenesis and pathophysiology of ischemic disease. This is Hypoxia-inducible factor 1-alpha (HIF1A) from Gallus gallus (Chicken).